Here is a 658-residue protein sequence, read N- to C-terminus: Outer dynein arm-docking complex subunit 1 (658 aa).

Coiled-coil stretches lie at residues 11–156 (KEVH…RYLN), 186–234 (REEA…KNDE), and 303–380 (NFIN…TDIQ). Disordered stretches follow at residues 496–552 (DEEE…SVSH) and 574–658 (GAPV…RGYN). Ser500, Ser506, Ser507, and Ser509 each carry phosphoserine. 4 stretches are compositionally biased toward low complexity: residues 506 to 519 (SSPSLTLSSPQISL), 574 to 583 (GAPVSSRSSQ), 592 to 604 (TSSSSYLGSTGYL), and 621 to 639 (SMGSELSRGLSSSSGHASS).

It belongs to the ODA1/DCC2 family. As to quaternary structure, component of the outer dynein arm-docking complex along with ODAD2, ODAD3, ODAD4 and CLXN. Interacts with ODAD3. Interacts with ODAD4; this interaction may facilitate the recruitment and/or attachment of outer dynein arm docking complex proteins including ODAD1, ODAD3, and ODAD4 to ciliary axonemes. Interacts with DNAH9. Interacts with MNS1. Interacts with PIERCE1 and PIERCE2; the interactions link the outer dynein arms docking complex (ODA-DC) to the internal microtubule inner proteins (MIP) in cilium axoneme. As to expression, expressed in motile ciliated tissues.

It is found in the cytoplasm. The protein localises to the cytoskeleton. It localises to the cilium axoneme. Its function is as follows. Component of the outer dynein arm-docking complex that mediates outer dynein arms (ODA) binding onto the doublet microtubule. Involved in mediating assembly of both ODAs and their axonemal docking complex onto ciliary microtubules. This Mus musculus (Mouse) protein is Outer dynein arm-docking complex subunit 1 (Odad1).